A 224-amino-acid polypeptide reads, in one-letter code: Ribonuclease 3 (224 aa).

The RNase III domain occupies 5-127 (LERLCRRLNY…ILAAIYLDGG (123 aa)). E40 is a Mg(2+) binding site. D44 is a catalytic residue. D113 and E116 together coordinate Mg(2+). The active site involves E116. Positions 154–224 (DAKTQLQEFL…AKAMLEQLQG (71 aa)) constitute a DRBM domain.

The protein belongs to the ribonuclease III family. In terms of assembly, homodimer. Requires Mg(2+) as cofactor.

The protein localises to the cytoplasm. The enzyme catalyses Endonucleolytic cleavage to 5'-phosphomonoester.. Functionally, digests double-stranded RNA. Involved in the processing of primary rRNA transcript to yield the immediate precursors to the large and small rRNAs (23S and 16S). Processes some mRNAs, and tRNAs when they are encoded in the rRNA operon. Processes pre-crRNA and tracrRNA of type II CRISPR loci if present in the organism. This chain is Ribonuclease 3, found in Legionella pneumophila (strain Paris).